The following is a 286-amino-acid chain: Release factor glutamine methyltransferase (286 aa).

Residues Asp136 and Asn179 each contribute to the S-adenosyl-L-methionine site. 179–182 contacts substrate; the sequence is NPPY.

The protein belongs to the protein N5-glutamine methyltransferase family. PrmC subfamily.

It catalyses the reaction L-glutaminyl-[peptide chain release factor] + S-adenosyl-L-methionine = N(5)-methyl-L-glutaminyl-[peptide chain release factor] + S-adenosyl-L-homocysteine + H(+). Its function is as follows. Methylates the class 1 translation termination release factors RF1/PrfA and RF2/PrfB on the glutamine residue of the universally conserved GGQ motif. The chain is Release factor glutamine methyltransferase from Borreliella burgdorferi (strain ATCC 35210 / DSM 4680 / CIP 102532 / B31) (Borrelia burgdorferi).